A 377-amino-acid polypeptide reads, in one-letter code: tRNA-specific 2-thiouridylase MnmA (377 aa).

ATP-binding positions include Gly8–Ser15 and Met34. The interaction with target base in tRNA stretch occupies residues Asn94–Asp96. Residue Cys99 is the Nucleophile of the active site. Cys99 and Cys201 are joined by a disulfide. ATP is bound at residue Gly123. The interval Lys151 to Gln153 is interaction with tRNA. The Cysteine persulfide intermediate role is filled by Cys201. The tract at residues Arg315–Tyr316 is interaction with tRNA.

Belongs to the MnmA/TRMU family.

The protein localises to the cytoplasm. It catalyses the reaction S-sulfanyl-L-cysteinyl-[protein] + uridine(34) in tRNA + AH2 + ATP = 2-thiouridine(34) in tRNA + L-cysteinyl-[protein] + A + AMP + diphosphate + H(+). In terms of biological role, catalyzes the 2-thiolation of uridine at the wobble position (U34) of tRNA, leading to the formation of s(2)U34. The protein is tRNA-specific 2-thiouridylase MnmA of Acinetobacter baylyi (strain ATCC 33305 / BD413 / ADP1).